Consider the following 245-residue polypeptide: 8-amino-3,8-dideoxy-manno-octulosonate cytidylyltransferase (245 aa).

It belongs to the KdsB family.

The protein resides in the cytoplasm. It catalyses the reaction 8-amino-3,8-dideoxy-alpha-D-manno-octulosonate + CTP = CMP-8-amino-3,8-dideoxy-alpha-D-manno-oct-2-ulosonate + diphosphate. It participates in bacterial outer membrane biogenesis; lipopolysaccharide biosynthesis. In terms of biological role, activates KDO8N (a required 8-carbon sugar) for incorporation into bacterial lipopolysaccharide in the Shewanella genus. This chain is 8-amino-3,8-dideoxy-manno-octulosonate cytidylyltransferase, found in Shewanella pealeana (strain ATCC 700345 / ANG-SQ1).